We begin with the raw amino-acid sequence, 265 residues long: Capsule polysaccharide export inner-membrane protein BexB (265 aa).

6 helical membrane passes run 37-57 (IGFF…VMMW), 64-84 (KFST…AMMW), 118-138 (LLEV…LVMI), 151-171 (LIAW…ICAI), 178-198 (FGKI…AFFF), and 235-255 (ESIG…LVMV). The ABC transmembrane type-2 domain maps to 37-258 (IGFFWLFVEP…LLGLVMVKNF (222 aa)).

The protein belongs to the ABC-2 integral membrane protein family.

Its subcellular location is the cell inner membrane. May form an ATP-driven capsule polysaccharide export apparatus, in association with the BexA, BexC and BexD proteins. This Haemophilus influenzae protein is Capsule polysaccharide export inner-membrane protein BexB (bexB).